The primary structure comprises 104 residues: UPF0235 protein Paes_1868 (104 aa).

Belongs to the UPF0235 family.

This Prosthecochloris aestuarii (strain DSM 271 / SK 413) protein is UPF0235 protein Paes_1868.